Consider the following 184-residue polypeptide: Chromophore lyase CpcS/CpeS 1 (184 aa).

It belongs to the CpcS/CpeS biliprotein lyase family.

Its function is as follows. Covalently attaches a chromophore to Cys residue(s) of phycobiliproteins. The protein is Chromophore lyase CpcS/CpeS 1 of Synechococcus sp. (strain JA-3-3Ab) (Cyanobacteria bacterium Yellowstone A-Prime).